We begin with the raw amino-acid sequence, 212 residues long: Ras-like protein (212 aa).

GTP is bound at residue 15 to 22 (GGGGVGKS). The Effector region signature appears at 37–45 (YDPTIEDSY). Residues 62 to 66 (DTAGQ) and 121 to 124 (NKCD) each bind GTP. 2 S-palmitoyl cysteine lipidation sites follow: cysteine 205 and cysteine 206. Cysteine 209 is modified (cysteine methyl ester). The S-geranylgeranyl cysteine moiety is linked to residue cysteine 209. The propeptide at 210 to 212 (IVM) is removed in mature form.

It belongs to the small GTPase superfamily. Ras family.

It localises to the cell membrane. The enzyme catalyses GTP + H2O = GDP + phosphate + H(+). With respect to regulation, alternates between an inactive form bound to GDP and an active form bound to GTP. Activated by a guanine nucleotide-exchange factor (GEF) and inactivated by a GTPase-activating protein (GAP). The sequence is that of Ras-like protein (rasA) from Emericella nidulans (strain FGSC A4 / ATCC 38163 / CBS 112.46 / NRRL 194 / M139) (Aspergillus nidulans).